Consider the following 141-residue polypeptide: Light-regulated protein 1, chloroplastic (141 aa).

Residues 1 to 41 (MQGALFIKPTILLPLPSSVSSPKLTFLLPHATKASRLSSLR) constitute a chloroplast transit peptide. Over residues 35–51 (SRLSSLRSNNSSSSSSL) the composition is skewed to low complexity. Residues 35–58 (SRLSSLRSNNSSSSSSLTSDPNTV) are disordered. The 2 X 15 AA approximate repeats stretch occupies residues 58–132 (VDYNSSILSV…ACDDLGGEFC (75 aa)). A run of 2 repeats spans residues 67–81 (VFPA…GYAC) and 118–132 (VFRE…GEFC).

As to quaternary structure, component of high molecular weight thylakoid LFNRs-containing protein complexes containing LIR1, LFNR1, LFNR2, TIC62 and TROL proteins. Interacts directly with LFNR1 and LFNR2; LIR1 increases the affinity of LFNR1 and LFNR2 for TIC62 and subsequent thylakoid relocalization. In terms of processing, may form interchain disulfide bonds with LFNR1 and LFNR2.

The protein localises to the plastid. It localises to the chloroplast thylakoid membrane. Its subcellular location is the chloroplast envelope. The protein resides in the chloroplast stroma. Functionally, thylakoid-determinant subunit of high molecular weight LFNRs-containing protein complexes. The polypeptide is Light-regulated protein 1, chloroplastic (Arabidopsis thaliana (Mouse-ear cress)).